Reading from the N-terminus, the 114-residue chain is MDMLLLVLVCLLTCSGQMLQKQAVISWQRQPCSHWQKLFSPWLIASVVALGSGMLLWIYLLQRLPLSMAYPMLSINLVLVLIGSRLFFHEQISYHNWLGAGAIIIGALLLGGLL.

Helical transmembrane passes span 41-61 (PWLI…IYLL), 64-84 (LPLS…LIGS), and 94-114 (YHNW…GGLL). In terms of domain architecture, EamA spans 53–112 (GMLLWIYLLQRLPLSMAYPMLSINLVLVLIGSRLFFHEQISYHNWLGAGAIIIGALLLGG).

It belongs to the ArnE family. Heterodimer of ArnE and ArnF.

It is found in the cell inner membrane. It participates in bacterial outer membrane biogenesis; lipopolysaccharide biosynthesis. Functionally, translocates 4-amino-4-deoxy-L-arabinose-phosphoundecaprenol (alpha-L-Ara4N-phosphoundecaprenol) from the cytoplasmic to the periplasmic side of the inner membrane. This is Probable 4-amino-4-deoxy-L-arabinose-phosphoundecaprenol flippase subunit ArnE from Aeromonas salmonicida (strain A449).